The chain runs to 346 residues: T-box protein 12 (346 aa).

The segment covering 33-48 (DEEDVEVDVEDVDDVD) has biased composition (acidic residues). The tract at residues 33–66 (DEEDVEVDVEDVDDVDLSSIPSKSPERSRGRPKI) is disordered. The segment at residues 86–268 (LWAKFFDLGT…KNPFAKGFRD (183 aa)) is a DNA-binding region (T-box).

The protein localises to the nucleus. Functionally, transcription factor. Involved in cell fate determination; required to pattern the posterior hindgut. Involved in motor neuron fate determination and maintenance, acting as a transcriptional repressor to counteract gene activation by transcription factor unc-3 in a subset of motor neurons. Required throughout development to repress transcription by unc-3, probably acting by binding to specific promoter elements. Represses expression of VA and VB motor neuron-specific effector genes, such as DEG/ENaC channel del-1 and the innexin inx-12, in DA and DB motor neurons. Represses expression of transcription factor bnc-1, perhaps acting directly, in DA and DB motor neurons. The protein is T-box protein 12 (mab-9) of Caenorhabditis elegans.